The primary structure comprises 380 residues: Lipoyl synthase, mitochondrial (380 aa).

The [4Fe-4S] cluster site is built by Cys104, Cys109, Cys115, Cys135, Cys139, Cys142, and Ser350. Positions 120–339 constitute a Radical SAM core domain; that stretch reads EHGTQTATIM…ETRGNELGFL (220 aa).

This sequence belongs to the radical SAM superfamily. Lipoyl synthase family. Requires [4Fe-4S] cluster as cofactor.

It is found in the mitochondrion. It catalyses the reaction [[Fe-S] cluster scaffold protein carrying a second [4Fe-4S](2+) cluster] + N(6)-octanoyl-L-lysyl-[protein] + 2 oxidized [2Fe-2S]-[ferredoxin] + 2 S-adenosyl-L-methionine + 4 H(+) = [[Fe-S] cluster scaffold protein] + N(6)-[(R)-dihydrolipoyl]-L-lysyl-[protein] + 4 Fe(3+) + 2 hydrogen sulfide + 2 5'-deoxyadenosine + 2 L-methionine + 2 reduced [2Fe-2S]-[ferredoxin]. Its pathway is protein modification; protein lipoylation via endogenous pathway; protein N(6)-(lipoyl)lysine from octanoyl-[acyl-carrier-protein]: step 2/2. Catalyzes the radical-mediated insertion of two sulfur atoms into the C-6 and C-8 positions of the octanoyl moiety bound to the lipoyl domains of lipoate-dependent enzymes, thereby converting the octanoylated domains into lipoylated derivatives. This is Lipoyl synthase, mitochondrial from Culex quinquefasciatus (Southern house mosquito).